Reading from the N-terminus, the 426-residue chain is MSTVRESWLKPKKNIQTNLGDYEDMDKISRLPDDLLVKVLLFLPTKIAVSTSILSKRWEFLWMWLPKLEYHNTNYSASEEQRLRSFINLNLQLHRAPIIESLRLKFSLGRSIKPQNIKQWIIIAVFRCVRELSINLFPLYCIENPAKLPSSLYISKSLVILKLKDQILVDVPRMAYLPSLKYLLLKRVTYKDSNSLHQLLSSCPVLKNLVVERDEYNHDETLSITVSSLQRLTLKISRGGSFDELVINTPSLKYFKLTDYLGECETELDDDSYSYVFKDMPKLEEAHIDSTYPDIGKFVRSITSVKRLSLCVKVNAEEALYREGICFKQLEHLKLCPCDSNWSKLLARLLKDSPNLRELEIKLNKDHKASFDDPACLENQLNYVVQSSIPSLERFTWTWIYGSQNEIDYLEKLKKRLLLTNWQNLV.

An F-box domain is found at Met25–His71. LRR repeat units lie at residues Ser50–Tyr75, Glu80–Phe106, Ile160–Arg187, Val188–Arg213, Thr221–Asp259, Glu265–Ser290, Cys311–Pro337, Cys338–Leu363, and Asp373–Trp399.

The sequence is that of Putative F-box/LRR-repeat protein At4g15060 from Arabidopsis thaliana (Mouse-ear cress).